Here is a 355-residue protein sequence, read N- to C-terminus: MACINGENRDFSSSSSLSSLPMIVSRNFSARDDGETGDEFPFERIFPVYARGTLNPVADPVLLDFTNSSYDPIWDSIREEAKLEAEEEPVLSSFLYASILSHDCLEQALSFVLANRLQNPTLLATQLMDIFCNVMVHDRGIQSSIRLDVQAFKDRDPACLSYSSAILHLKGYLALQAYRVAHKLWKQGRKLLALALQSRVSEVFGIDIHPAARIGKGILLDHGTGVVIGETAVIGDRVSILHGVTLGGTGKETGDRHPNIGDGALLGACVTILGNIKIGAGAMVAAGSLVLKDVPSHSMVAGNPAKLIGFVDEQDPSMTMEHDATREFFQNVAVAYRETIPNGSSVSGSCRERRH.

Belongs to the transferase hexapeptide repeat family. In terms of assembly, homomultimer. In terms of tissue distribution, localized in vascular tissues, particularly in phloem.

Its subcellular location is the cytoplasm. The enzyme catalyses L-serine + acetyl-CoA = O-acetyl-L-serine + CoA. It participates in amino-acid biosynthesis; L-cysteine biosynthesis; L-cysteine from L-serine: step 1/2. Feedback inhibitions by L-Ser and acetyl-CoA. The polypeptide is Serine acetyltransferase 4 (Arabidopsis thaliana (Mouse-ear cress)).